The sequence spans 776 residues: Homoaconitase, mitochondrial (776 aa).

The transit peptide at 1–38 (MQSRLVSQSGLGRRWAVLRCALSKTYQRRTLTSTRRQF) directs the protein to the mitochondrion. Residues C394, C463, and C466 each contribute to the [4Fe-4S] cluster site.

It belongs to the aconitase/IPM isomerase family. [4Fe-4S] cluster is required as a cofactor.

The protein resides in the mitochondrion. It carries out the reaction (2R,3S)-homoisocitrate = cis-homoaconitate + H2O. It participates in amino-acid biosynthesis; L-lysine biosynthesis via AAA pathway; L-alpha-aminoadipate from 2-oxoglutarate: step 3/5. Functionally, catalyzes the reversible hydration of cis-homoaconitate to (2R,3S)-homoisocitrate, a step in the alpha-aminoadipate pathway for lysine biosynthesis. This is Homoaconitase, mitochondrial (lys4) from Emericella nidulans (strain FGSC A4 / ATCC 38163 / CBS 112.46 / NRRL 194 / M139) (Aspergillus nidulans).